The sequence spans 440 residues: MSEFSQTVPELVAWARKNDFSISLPVDRLSFLLAVATLNGERLEGEMSEGELVDAFRHVSDAFEQTSETISQRANNAINDLVRQRLLNRFTSEITEGNAIYRLTPLGIGITDYYIRQREFSTLRLSMQLSIVASELKRAADAAEEGGDEFHWHRNVFAPLKYSVAEIFDSIDLTQRIMDEQQQLVKDDIAQLLNKDWRAAISSCELLLSETSGTLRELQDTLDAAGDKLQANLLRIQDSTMARDDLHFVDRLVFDLQSKLDRIVSWGQQAIDLWIGYDRHVHKFIRTAIDMDKNRVFAQRLRQSVQTYFDEPWALTYANADRLLDMRDEEMALRDEEVTGELPADLEFEEFNEIREQLAALIEAQLAVYKEKGIPLDLGLVAREFLAQYPRGRHFDVARIVVDQAVQLGVAQADFTGLPAKWQPINDYGAKVQAHVIDKY.

The tract at residues 208–236 (LSETSGTLRELQDTLDAAGDKLQANLLRI) is leucine-zipper.

The protein belongs to the MukF family. As to quaternary structure, interacts, and probably forms a ternary complex, with MukE and MukB via its C-terminal region. The complex formation is stimulated by calcium or magnesium. It is required for an interaction between MukE and MukB.

Its subcellular location is the cytoplasm. It is found in the nucleoid. Functionally, involved in chromosome condensation, segregation and cell cycle progression. May participate in facilitating chromosome segregation by condensation DNA from both sides of a centrally located replisome during cell division. Not required for mini-F plasmid partitioning. Probably acts via its interaction with MukB and MukE. Overexpression results in anucleate cells. It has a calcium binding activity. This chain is Chromosome partition protein MukF, found in Klebsiella pneumoniae (strain 342).